The primary structure comprises 350 residues: GTPase Obg (350 aa).

The region spanning 1 to 159 (MRFIDQTEIF…FRLHLELKLL (159 aa)) is the Obg domain. Positions 160 to 328 (AEVGIIGLPN…LLQQVWEELD (169 aa)) constitute an OBG-type G domain. GTP-binding positions include 166 to 173 (GLPNAGKS), 191 to 195 (FTTLI), 213 to 216 (DIPG), 280 to 283 (NKID), and 309 to 311 (SAV). Mg(2+) contacts are provided by Ser173 and Thr193.

This sequence belongs to the TRAFAC class OBG-HflX-like GTPase superfamily. OBG GTPase family. In terms of assembly, monomer. It depends on Mg(2+) as a cofactor.

Its subcellular location is the cytoplasm. Its function is as follows. An essential GTPase which binds GTP, GDP and possibly (p)ppGpp with moderate affinity, with high nucleotide exchange rates and a fairly low GTP hydrolysis rate. Plays a role in control of the cell cycle, stress response, ribosome biogenesis and in those bacteria that undergo differentiation, in morphogenesis control. The protein is GTPase Obg of Acaryochloris marina (strain MBIC 11017).